The sequence spans 431 residues: Mannan endo-1,4-beta-mannosidase 5 (431 aa).

Residues 1–24 (MVPTRNRPMLRILGFFICAAFIYL) form the signal peptide. N45 carries N-linked (GlcNAc...) asparagine glycosylation. W97 contacts substrate. N168 carries an N-linked (GlcNAc...) asparagine glycan. N213 contributes to the substrate binding site. The active-site Proton donor is E214. N-linked (GlcNAc...) asparagine glycosylation occurs at N282. Y294 serves as a coordination point for substrate. N-linked (GlcNAc...) asparagine glycosylation is present at N301. E334 (nucleophile) is an active-site residue. A substrate-binding site is contributed by W376.

It belongs to the glycosyl hydrolase 5 (cellulase A) family. As to expression, expressed in stems.

The protein localises to the secreted. The catalysed reaction is Random hydrolysis of (1-&gt;4)-beta-D-mannosidic linkages in mannans, galactomannans and glucomannans.. This Arabidopsis thaliana (Mouse-ear cress) protein is Mannan endo-1,4-beta-mannosidase 5 (MAN5).